Here is a 64-residue protein sequence, read N- to C-terminus: Endodeoxyribonuclease toxin RalR (64 aa).

It depends on Ca(2+) as a cofactor. Mg(2+) is required as a cofactor.

With respect to regulation, inhibited by EDTA. Functionally, toxic component of a type I toxin-antitoxin (TA) system. Upon overexpression inhibits growth and reduces colony-forming units in both the presence and absence of the Rac prophage, cells become filamentous. Has deoxyribonuclease activity (probably endonucleolytic), does not digest RNA. Its toxic effects are neutralized by sRNA antitoxin RalA, which is encoded in trans on the opposite DNA strand. Has RAL-like activity. The sequence is that of Endodeoxyribonuclease toxin RalR (ralR) from Escherichia coli (strain K12).